The chain runs to 670 residues: DNA ligase (670 aa).

NAD(+)-binding positions include 32 to 36 (DSEYD), 81 to 82 (SL), and Glu114. The active-site N6-AMP-lysine intermediate is the Lys116. Positions 137, 174, 291, and 315 each coordinate NAD(+). Zn(2+) is bound by residues Cys409, Cys412, Cys427, and Cys433. The region spanning 592–670 (ASENLFKDKT…EEEFLAQITR (79 aa)) is the BRCT domain.

The protein belongs to the NAD-dependent DNA ligase family. LigA subfamily. Requires Mg(2+) as cofactor. Mn(2+) serves as cofactor.

It carries out the reaction NAD(+) + (deoxyribonucleotide)n-3'-hydroxyl + 5'-phospho-(deoxyribonucleotide)m = (deoxyribonucleotide)n+m + AMP + beta-nicotinamide D-nucleotide.. Its function is as follows. DNA ligase that catalyzes the formation of phosphodiester linkages between 5'-phosphoryl and 3'-hydroxyl groups in double-stranded DNA using NAD as a coenzyme and as the energy source for the reaction. It is essential for DNA replication and repair of damaged DNA. The sequence is that of DNA ligase from Haemophilus influenzae (strain PittGG).